The sequence spans 334 residues: UDP-glucose 4-epimerase (334 aa).

NAD(+)-binding positions include 11 to 12, 31 to 36, 50 to 51, 72 to 76, Asn91, Thr116, Tyr140, Lys144, and Phe168; these read YI, DNLQKG, DI, and FAANS. Positions 116 and 140 each coordinate substrate. Catalysis depends on Tyr140, which acts as the Proton acceptor. Substrate contacts are provided by residues Asn169, 188-189, 205-207, Arg220, and 281-284; these read HL, AIF, and RSGD.

This sequence belongs to the NAD(P)-dependent epimerase/dehydratase family. As to quaternary structure, homodimer. The cofactor is NAD(+).

The catalysed reaction is UDP-alpha-D-glucose = UDP-alpha-D-galactose. It functions in the pathway carbohydrate metabolism; galactose metabolism. In terms of biological role, involved in the metabolism of galactose. Catalyzes the conversion of UDP-galactose (UDP-Gal) to UDP-glucose (UDP-Glc) through a mechanism involving the transient reduction of NAD. This is UDP-glucose 4-epimerase (galE) from Halalkalibacterium halodurans (strain ATCC BAA-125 / DSM 18197 / FERM 7344 / JCM 9153 / C-125) (Bacillus halodurans).